A 278-amino-acid polypeptide reads, in one-letter code: 4-diphosphocytidyl-2-C-methyl-D-erythritol kinase (278 aa).

The active site involves Lys9. 89 to 99 contacts ATP; that stretch reads PVASGIGGGSA. Asp128 is an active-site residue.

Belongs to the GHMP kinase family. IspE subfamily.

The enzyme catalyses 4-CDP-2-C-methyl-D-erythritol + ATP = 4-CDP-2-C-methyl-D-erythritol 2-phosphate + ADP + H(+). Its pathway is isoprenoid biosynthesis; isopentenyl diphosphate biosynthesis via DXP pathway; isopentenyl diphosphate from 1-deoxy-D-xylulose 5-phosphate: step 3/6. Functionally, catalyzes the phosphorylation of the position 2 hydroxy group of 4-diphosphocytidyl-2C-methyl-D-erythritol. This chain is 4-diphosphocytidyl-2-C-methyl-D-erythritol kinase, found in Cereibacter sphaeroides (strain ATCC 17029 / ATH 2.4.9) (Rhodobacter sphaeroides).